The primary structure comprises 360 residues: Phospho-N-acetylmuramoyl-pentapeptide-transferase (360 aa).

The next 10 helical transmembrane spans lie at 27 to 47 (ILSV…MIRM), 73 to 93 (TMGG…WGDL), 97 to 117 (FVWI…VDDW), 132 to 152 (WKYL…FFTA), 164 to 184 (FFKS…YFVI), 199 to 219 (GLAI…AYAG), 236 to 256 (AGEL…FLWF), 263 to 283 (VFMG…MAVI), 288 to 308 (IVLF…MLQV), and 337 to 357 (KIIV…LATL).

Belongs to the glycosyltransferase 4 family. MraY subfamily. The cofactor is Mg(2+).

Its subcellular location is the cell inner membrane. The enzyme catalyses UDP-N-acetyl-alpha-D-muramoyl-L-alanyl-gamma-D-glutamyl-meso-2,6-diaminopimeloyl-D-alanyl-D-alanine + di-trans,octa-cis-undecaprenyl phosphate = di-trans,octa-cis-undecaprenyl diphospho-N-acetyl-alpha-D-muramoyl-L-alanyl-D-glutamyl-meso-2,6-diaminopimeloyl-D-alanyl-D-alanine + UMP. It participates in cell wall biogenesis; peptidoglycan biosynthesis. Functionally, catalyzes the initial step of the lipid cycle reactions in the biosynthesis of the cell wall peptidoglycan: transfers peptidoglycan precursor phospho-MurNAc-pentapeptide from UDP-MurNAc-pentapeptide onto the lipid carrier undecaprenyl phosphate, yielding undecaprenyl-pyrophosphoryl-MurNAc-pentapeptide, known as lipid I. In Alcanivorax borkumensis (strain ATCC 700651 / DSM 11573 / NCIMB 13689 / SK2), this protein is Phospho-N-acetylmuramoyl-pentapeptide-transferase.